A 478-amino-acid polypeptide reads, in one-letter code: Phenylalanine--tRNA ligase alpha subunit (478 aa).

Residues T318, Q357–E359, and Y397 each bind L-phenylalanine. E399 serves as a coordination point for Mg(2+). F422 lines the L-phenylalanine pocket.

This sequence belongs to the class-II aminoacyl-tRNA synthetase family. Phe-tRNA synthetase alpha subunit type 2 subfamily. In terms of assembly, tetramer of two alpha and two beta subunits. Mg(2+) serves as cofactor.

The protein resides in the cytoplasm. The catalysed reaction is tRNA(Phe) + L-phenylalanine + ATP = L-phenylalanyl-tRNA(Phe) + AMP + diphosphate + H(+). The sequence is that of Phenylalanine--tRNA ligase alpha subunit from Methanospirillum hungatei JF-1 (strain ATCC 27890 / DSM 864 / NBRC 100397 / JF-1).